Reading from the N-terminus, the 472-residue chain is Glutamate--tRNA ligase 2 (472 aa).

Residues 12-22 (PSPSGLLHLGN) carry the 'HIGH' region motif. Positions 253 to 257 (PLSKR) match the 'KMSKS' region motif. K256 serves as a coordination point for ATP.

It belongs to the class-I aminoacyl-tRNA synthetase family. Glutamate--tRNA ligase type 1 subfamily. As to quaternary structure, monomer.

The protein resides in the cytoplasm. It catalyses the reaction tRNA(Glu) + L-glutamate + ATP = L-glutamyl-tRNA(Glu) + AMP + diphosphate. Catalyzes the attachment of glutamate to tRNA(Glu) in a two-step reaction: glutamate is first activated by ATP to form Glu-AMP and then transferred to the acceptor end of tRNA(Glu). The polypeptide is Glutamate--tRNA ligase 2 (Nitrosococcus oceani (strain ATCC 19707 / BCRC 17464 / JCM 30415 / NCIMB 11848 / C-107)).